Reading from the N-terminus, the 304-residue chain is Glycine--tRNA ligase alpha subunit (304 aa).

This sequence belongs to the class-II aminoacyl-tRNA synthetase family. As to quaternary structure, tetramer of two alpha and two beta subunits.

The protein resides in the cytoplasm. It catalyses the reaction tRNA(Gly) + glycine + ATP = glycyl-tRNA(Gly) + AMP + diphosphate. The sequence is that of Glycine--tRNA ligase alpha subunit from Tolumonas auensis (strain DSM 9187 / NBRC 110442 / TA 4).